The chain runs to 396 residues: MVRLIHLIGAIILLFSYAYCGLSRLNEHDIEESYSHKRVKRQFERLGTKWSYGVVNYYYADKNNEIKEMVESAIAYIANHTCIRFNEDQNAVQRVQIRMQQNWLCQSTVGAPGMSMSKPIGELSMLVQSCDTIGSIVHEFSHSLGRFHEHTRPDRDNFMKVTTTVHEARPRPSGMTTMYGPFEHGSVMMYHADTYGPGTMDPLDMDYKQTMGNRRVTFYDMYKINQYYGCWCSKQLECKNGGYTSPSDCSRCNCPKGFFGNLCDERQQDSYELMAVNNLWQSITIPFAYKPEPGSDGFYSTFVYITGKANSTIEITLEGLQDVICTAGCTVNGVEIKFKEDSKITSPVVCCTDKPPYKNVFKSSHNPTIIELYSRTTLPSAVTFKYRFTNDKVVLG.

Positions 1–20 (MVRLIHLIGAIILLFSYAYC) are cleaved as a signal peptide. Residues 38–231 (RVKRQFERLG…YKINQYYGCW (194 aa)) form the Peptidase M12A domain. Asn-79 carries an N-linked (GlcNAc...) asparagine glycan. 4 cysteine pairs are disulfide-bonded: Cys-82–Cys-230, Cys-105–Cys-130, Cys-232–Cys-252, and Cys-254–Cys-263. Residue His-138 participates in Zn(2+) binding. Glu-139 is a catalytic residue. The Zn(2+) site is built by His-142 and His-148. Residues 225–264 (NQYYGCWCSKQLECKNGGYTSPSDCSRCNCPKGFFGNLCD) form the EGF-like domain. Asn-310 carries an N-linked (GlcNAc...) asparagine glycan.

Requires Zn(2+) as cofactor.

The protein resides in the secreted. In terms of biological role, metalloprotease. This is Zinc metalloproteinase nas-19 (nas-19) from Caenorhabditis elegans.